The following is a 201-amino-acid chain: Recombination protein RecR (201 aa).

The C4-type zinc finger occupies 59–74 (CEICGNMDTENMCRIC). The Toprim domain maps to 82–177 (SIIAIVETVA…KISRLASGIP (96 aa)).

The protein belongs to the RecR family.

Its function is as follows. May play a role in DNA repair. It seems to be involved in an RecBC-independent recombinational process of DNA repair. It may act with RecF and RecO. This chain is Recombination protein RecR, found in Rickettsia africae (strain ESF-5).